Consider the following 228-residue polypeptide: Uracil-DNA glycosylase (228 aa).

Asp-64 (proton acceptor) is an active-site residue.

It belongs to the uracil-DNA glycosylase (UDG) superfamily. UNG family.

The protein localises to the cytoplasm. It carries out the reaction Hydrolyzes single-stranded DNA or mismatched double-stranded DNA and polynucleotides, releasing free uracil.. Excises uracil residues from the DNA which can arise as a result of misincorporation of dUMP residues by DNA polymerase or due to deamination of cytosine. The polypeptide is Uracil-DNA glycosylase (Yersinia enterocolitica serotype O:8 / biotype 1B (strain NCTC 13174 / 8081)).